Reading from the N-terminus, the 267-residue chain is Non-homologous end joining protein Ku (267 aa).

Residues 10–190 (ISFGLVSFPV…TKYTAKELEL (181 aa)) form the Ku domain.

It belongs to the prokaryotic Ku family. In terms of assembly, homodimer. Interacts with LigD.

With LigD forms a non-homologous end joining (NHEJ) DNA repair enzyme, which repairs dsDNA breaks with reduced fidelity. Binds linear dsDNA with 5'- and 3'- overhangs but not closed circular dsDNA nor ssDNA. Recruits and stimulates the ligase activity of LigD. In Solibacter usitatus (strain Ellin6076), this protein is Non-homologous end joining protein Ku.